The primary structure comprises 843 residues: Elongation factor 2 (843 aa).

The tr-type G domain maps to 17–344 (HNIRNMSVIA…MMIFHLPSPH (328 aa)). Residues 26–33 (AHVDHGKS) and 158–161 (NKMD) each bind GTP. Residue H700 is modified to Diphthamide. S837 carries the post-translational modification Phosphoserine.

It belongs to the TRAFAC class translation factor GTPase superfamily. Classic translation factor GTPase family. In terms of assembly, may interact with glutaredoxins (Grxs). As to expression, expressed in root, stem, leaves, flowers and siliques.

The protein resides in the cytoplasm. It carries out the reaction GTP + H2O = GDP + phosphate + H(+). It functions in the pathway protein biosynthesis; polypeptide chain elongation. In terms of biological role, catalyzes the GTP-dependent ribosomal translocation step during translation elongation. During this step, the ribosome changes from the pre-translocational (PRE) to the post-translocational (POST) state as the newly formed A-site-bound peptidyl-tRNA and P-site-bound deacylated tRNA move to the P and E sites, respectively. Catalyzes the coordinated movement of the two tRNA molecules, the mRNA and conformational changes in the ribosome. Involved in cold responses leading to freezing tolerance via the induction of cold-responsive genes. This is Elongation factor 2 from Arabidopsis thaliana (Mouse-ear cress).